The chain runs to 286 residues: Mating type protein A-1 (286 aa).

The alpha box DNA-binding region spans 40–95 (AAKKKVNGFMSFRSYYSPLFSQLPQKERSPFMTILWQHDPFHNEWNFMCSVYSSIR).

Belongs to the MATALPHA1 family.

The protein localises to the nucleus. In terms of biological role, required for expression of the heterokaryon incompatibility and sexual functions. The polypeptide is Mating type protein A-1 (MTA-1) (Neurospora africana).